We begin with the raw amino-acid sequence, 156 residues long: Ribosomal RNA large subunit methyltransferase H (156 aa).

Residues Leu73, Gly104, and 123 to 128 (LSALTM) contribute to the S-adenosyl-L-methionine site.

The protein belongs to the RNA methyltransferase RlmH family. In terms of assembly, homodimer.

The protein localises to the cytoplasm. The enzyme catalyses pseudouridine(1915) in 23S rRNA + S-adenosyl-L-methionine = N(3)-methylpseudouridine(1915) in 23S rRNA + S-adenosyl-L-homocysteine + H(+). In terms of biological role, specifically methylates the pseudouridine at position 1915 (m3Psi1915) in 23S rRNA. The chain is Ribosomal RNA large subunit methyltransferase H from Tolumonas auensis (strain DSM 9187 / NBRC 110442 / TA 4).